We begin with the raw amino-acid sequence, 260 residues long: Hydroxypyruvate/pyruvate aldolase Bphyt_0320 (260 aa).

Catalysis depends on His48, which acts as the Proton acceptor. A divalent metal cation is bound by residues Glu157 and Asp183.

Belongs to the HpcH/HpaI aldolase family. Requires Mn(2+) as cofactor. Mg(2+) is required as a cofactor. It depends on Co(2+) as a cofactor.

It carries out the reaction D-glyceraldehyde + 3-hydroxypyruvate = 2-dehydro-D-gluconate. The catalysed reaction is D-glyceraldehyde + pyruvate = 2-dehydro-3-deoxy-L-galactonate. The enzyme catalyses 2-dehydro-3-deoxy-D-gluconate = D-glyceraldehyde + pyruvate. In terms of biological role, aldolase which can catalyze in vitro the aldolisation reaction between hydroxypyruvate (HPA) or pyruvate (PA) and D-glyceraldehyde (D-GA). The condensation of hydroxypyruvate and D-glyceraldehyde produces 2-dehydro-D-gluconate. The condensation of pyruvate and D-glyceraldehyde produces 2-dehydro-3-deoxy-L-galactonate as the major product and 2-dehydro-3-deoxy-D-gluconate. Also catalyzes the retro-aldol type decarboxylation of oxaloacetate, a general property of known pyruvate aldolases. This chain is Hydroxypyruvate/pyruvate aldolase Bphyt_0320, found in Paraburkholderia phytofirmans (strain DSM 17436 / LMG 22146 / PsJN) (Burkholderia phytofirmans).